Here is a 331-residue protein sequence, read N- to C-terminus: L-lactate dehydrogenase A chain (331 aa).

NAD(+) contacts are provided by residues 29 to 57 (GMVG…MEDK) and arginine 98. Substrate contacts are provided by arginine 105, asparagine 137, and arginine 168. Residue asparagine 137 coordinates NAD(+). Histidine 192 functions as the Proton acceptor in the catalytic mechanism. Threonine 247 provides a ligand contact to substrate.

It belongs to the LDH/MDH superfamily. LDH family. As to quaternary structure, homotetramer.

The protein localises to the cytoplasm. The catalysed reaction is (S)-lactate + NAD(+) = pyruvate + NADH + H(+). It functions in the pathway fermentation; pyruvate fermentation to lactate; (S)-lactate from pyruvate: step 1/1. Its function is as follows. Interconverts simultaneously and stereospecifically pyruvate and lactate with concomitant interconversion of NADH and NAD(+). The protein is L-lactate dehydrogenase A chain (ldha) of Dissostichus eleginoides (Patagonian toothfish).